The chain runs to 671 residues: DNA ligase (671 aa).

Residues 32–36 (DAEYD), 81–82 (SL), and Glu113 contribute to the NAD(+) site. Catalysis depends on Lys115, which acts as the N6-AMP-lysine intermediate. The NAD(+) site is built by Arg136, Glu173, Lys290, and Lys314. Zn(2+)-binding residues include Cys408, Cys411, Cys426, and Cys432. The 79-residue stretch at 593 to 671 (EIDSPFAGKT…EAEMIRLLDA (79 aa)) folds into the BRCT domain.

Belongs to the NAD-dependent DNA ligase family. LigA subfamily. Mg(2+) is required as a cofactor. The cofactor is Mn(2+).

It catalyses the reaction NAD(+) + (deoxyribonucleotide)n-3'-hydroxyl + 5'-phospho-(deoxyribonucleotide)m = (deoxyribonucleotide)n+m + AMP + beta-nicotinamide D-nucleotide.. In terms of biological role, DNA ligase that catalyzes the formation of phosphodiester linkages between 5'-phosphoryl and 3'-hydroxyl groups in double-stranded DNA using NAD as a coenzyme and as the energy source for the reaction. It is essential for DNA replication and repair of damaged DNA. This chain is DNA ligase, found in Salmonella schwarzengrund (strain CVM19633).